We begin with the raw amino-acid sequence, 448 residues long: Asparagine--tRNA ligase (448 aa).

This sequence belongs to the class-II aminoacyl-tRNA synthetase family. As to quaternary structure, homodimer.

It localises to the cytoplasm. The enzyme catalyses tRNA(Asn) + L-asparagine + ATP = L-asparaginyl-tRNA(Asn) + AMP + diphosphate + H(+). This Streptococcus mutans serotype c (strain ATCC 700610 / UA159) protein is Asparagine--tRNA ligase.